The primary structure comprises 531 residues: 2-isopropylmalate synthase (531 aa).

In terms of domain architecture, Pyruvate carboxyltransferase spans Ile-8–Tyr-284. Mn(2+) is bound by residues Asp-17, His-208, His-210, and Asn-244. Residues Arg-408–Ala-531 are regulatory domain.

It belongs to the alpha-IPM synthase/homocitrate synthase family. LeuA type 1 subfamily. As to quaternary structure, homodimer. Mn(2+) is required as a cofactor.

The protein resides in the cytoplasm. It carries out the reaction 3-methyl-2-oxobutanoate + acetyl-CoA + H2O = (2S)-2-isopropylmalate + CoA + H(+). It participates in amino-acid biosynthesis; L-leucine biosynthesis; L-leucine from 3-methyl-2-oxobutanoate: step 1/4. In terms of biological role, catalyzes the condensation of the acetyl group of acetyl-CoA with 3-methyl-2-oxobutanoate (2-ketoisovalerate) to form 3-carboxy-3-hydroxy-4-methylpentanoate (2-isopropylmalate). The polypeptide is 2-isopropylmalate synthase (Nostoc sp. (strain PCC 7120 / SAG 25.82 / UTEX 2576)).